An 85-amino-acid polypeptide reads, in one-letter code: Large ribosomal subunit protein bL27 (85 aa).

The segment at 1 to 21 is disordered; sequence MAHKKAGGSTRNGRDSESKRL.

It belongs to the bacterial ribosomal protein bL27 family.

The protein is Large ribosomal subunit protein bL27 of Photorhabdus laumondii subsp. laumondii (strain DSM 15139 / CIP 105565 / TT01) (Photorhabdus luminescens subsp. laumondii).